A 192-amino-acid polypeptide reads, in one-letter code: Ion-translocating oxidoreductase complex subunit B (192 aa).

The tract at residues 1–26 (MNTIWIAVGALTLLGLVFGAILGYAS) is hydrophobic. Residues 32 to 91 (EDDPVVEKIDAILPQSQCGQCGYPGCRPYAEAVGLQGEKINRCAPGGEAVMLKMAELLNV) form the 4Fe-4S domain. Residues cysteine 49, cysteine 52, cysteine 57, cysteine 74, cysteine 117, cysteine 120, cysteine 123, cysteine 127, cysteine 147, cysteine 150, cysteine 153, and cysteine 157 each coordinate [4Fe-4S] cluster. 4Fe-4S ferredoxin-type domains lie at 108–137 (MLAV…GATR) and 138–167 (AMHT…LRPV).

It belongs to the 4Fe4S bacterial-type ferredoxin family. RnfB subfamily. As to quaternary structure, the complex is composed of six subunits: RsxA, RsxB, RsxC, RsxD, RsxE and RsxG. The cofactor is [4Fe-4S] cluster.

The protein resides in the cell inner membrane. Its function is as follows. Part of a membrane-bound complex that couples electron transfer with translocation of ions across the membrane. Required to maintain the reduced state of SoxR. This is Ion-translocating oxidoreductase complex subunit B from Salmonella agona (strain SL483).